The chain runs to 62 residues: U10-buthitoxin-Hj1a (62 aa).

Positions Met1–Gly22 are cleaved as a signal peptide. 3 disulfides stabilise this stretch: Cys28–Cys46, Cys33–Cys59, and Cys37–Cys61.

The protein belongs to the short scorpion toxin superfamily. Potassium channel inhibitor family. Alpha-KTx 23 subfamily. Expressed by the venom gland.

The protein localises to the secreted. Its function is as follows. May block potassium channels. In Hottentotta judaicus (Black scorpion), this protein is U10-buthitoxin-Hj1a.